We begin with the raw amino-acid sequence, 32 residues long: Protamine-1 (32 aa).

Residues 1–32 (PRRRRASSGRPVRRRRRPKMSRRRRRGGRRRR) form a disordered region.

In terms of tissue distribution, testis.

The protein resides in the nucleus. It is found in the chromosome. Its function is as follows. Protamines substitute for histones in the chromatin of sperm during the haploid phase of spermatogenesis. They compact sperm DNA into a highly condensed, stable and inactive complex. The protein is Protamine-1 of Esox lucius (Northern pike).